The primary structure comprises 215 residues: Pyrrolidone-carboxylate peptidase (215 aa).

Catalysis depends on residues glutamate 80, cysteine 143, and histidine 167.

The protein belongs to the peptidase C15 family. In terms of assembly, homotetramer.

The protein localises to the cytoplasm. The catalysed reaction is Release of an N-terminal pyroglutamyl group from a polypeptide, the second amino acid generally not being Pro.. Functionally, removes 5-oxoproline from various penultimate amino acid residues except L-proline. In Bacillus cereus (strain 03BB102), this protein is Pyrrolidone-carboxylate peptidase.